The chain runs to 325 residues: Tetraacyldisaccharide 4'-kinase (325 aa).

Serine 54–threonine 61 is an ATP binding site.

The protein belongs to the LpxK family.

The enzyme catalyses a lipid A disaccharide + ATP = a lipid IVA + ADP + H(+). The protein operates within glycolipid biosynthesis; lipid IV(A) biosynthesis; lipid IV(A) from (3R)-3-hydroxytetradecanoyl-[acyl-carrier-protein] and UDP-N-acetyl-alpha-D-glucosamine: step 6/6. Functionally, transfers the gamma-phosphate of ATP to the 4'-position of a tetraacyldisaccharide 1-phosphate intermediate (termed DS-1-P) to form tetraacyldisaccharide 1,4'-bis-phosphate (lipid IVA). In Rickettsia felis (strain ATCC VR-1525 / URRWXCal2) (Rickettsia azadi), this protein is Tetraacyldisaccharide 4'-kinase.